The following is a 204-amino-acid chain: Ras-related protein RabL (204 aa).

Position 14 to 21 (Gly-14 to Thr-21) interacts with GTP. Positions Arg-36–Tyr-44 match the Effector region motif. GTP-binding positions include Asp-62–Gln-66 and Thr-120–Asp-123. 2 S-geranylgeranyl cysteine lipidation sites follow: Cys-203 and Cys-204.

The protein belongs to the small GTPase superfamily. Rab family.

It is found in the cell membrane. This is Ras-related protein RabL (rabL) from Dictyostelium discoideum (Social amoeba).